The primary structure comprises 1664 residues: MYND-type zinc finger-containing chromatin reader Zmynd8 (1664 aa).

Low complexity-rich tracts occupy residues 1-16 (MEST…SLKS), 30-40 (SPQPQLQSSSL), and 61-84 (SAPP…INVG). 3 disordered regions span residues 1–84 (MEST…INVG), 251–271 (SLSN…LRSE), and 295–323 (LALN…KTPE). Residues 258–271 (NDDKGPRRSNLRSE) are compositionally biased toward basic and acidic residues. Polar residues predominate over residues 296–308 (ALNTSGEGESSLF). A compositionally biased stretch (low complexity) spans 309–320 (SDASDTKTTTAK). The segment at 343–389 (DPFCWKCRGCGKLMPCSKCLRSFHSYCVRPATTKFDSSWKCPECQVI) adopts a PHD-type zinc-finger fold. Cysteine 346, cysteine 349, cysteine 358, cysteine 361, histidine 366, cysteine 369, cysteine 383, and cysteine 386 together coordinate Zn(2+). One can recognise a Bromo domain in the interval 401–504 (VSVDLLSQLL…KVCRQEANEI (104 aa)). Zn(2+)-binding residues include cysteine 507, cysteine 510, and cysteine 525. The PWWP domain occupies 528 to 579 (PHLLLWAKLKGFPYWPAKAMGSSNSTLVNVRFFGKHDRAFVPVKDCFLYSAQ). Disordered stretches follow at residues 672–693 (KTKA…KKLS), 747–815 (ESVE…QNEN), 857–905 (KIPR…RQQE), and 919–1139 (TEVM…TNTS). Polar residues predominate over residues 676–690 (TESGNESDQSPSPTK). Basic residues predominate over residues 775–784 (HKRKSKHARK). Residues 785 to 800 (QHDNQDNQIEEAEKTG) are compositionally biased toward basic and acidic residues. Pro residues predominate over residues 874–884 (IPLPTAPPPKQ). Polar residues predominate over residues 935–952 (PANQPQTDQVPLQQETIT). Residues 953–962 (AQPESQMPAA) are compositionally biased toward low complexity. A compositionally biased stretch (pro residues) spans 1006–1019 (PPMPLPMPPPPPLP). Residues 1037–1053 (TTIQRVSQKQGGKSTDT) are compositionally biased toward polar residues. Residues 1073-1097 (SPTHSPLLSTAPSPSASPKPTSTLA) are compositionally biased toward low complexity. Residues cysteine 1399, cysteine 1402, cysteine 1410, cysteine 1411, cysteine 1417, cysteine 1421, histidine 1429, and cysteine 1433 each contribute to the Zn(2+) site. An MYND-type zinc finger spans residues 1399-1433 (CANCMREAQLYCCWNTSYCDYPCQQLHWPGHSATC). The tract at residues 1613–1648 (VPKATGRSGKNNSRMRQTYSNNINNSNPQGMRCNNN) is disordered. The segment covering 1620-1648 (SGKNNSRMRQTYSNNINNSNPQGMRCNNN) has biased composition (polar residues).

It localises to the nucleus. The protein localises to the chromosome. Its function is as follows. Chromatin reader that recognizes specific histone signatures to regulate transcription. Plays a role in neuronal development. In Drosophila melanogaster (Fruit fly), this protein is MYND-type zinc finger-containing chromatin reader Zmynd8.